A 436-amino-acid chain; its full sequence is Protein TolB homolog (436 aa).

Positions 1-27 are cleaved as a signal peptide; it reads MRHSIRLTAALLLAFIACFSFPLSAMA.

The protein belongs to the TolB family.

It is found in the periplasm. This chain is Protein TolB homolog, found in Chlorobium luteolum (strain DSM 273 / BCRC 81028 / 2530) (Pelodictyon luteolum).